The following is a 571-amino-acid chain: uncharacterized protein (571 aa).

Disordered regions lie at residues Thr71–Ala128, Asn142–Glu258, and Leu298–Arg336. The span at Pro88–Ala113 shows a compositional bias: polar residues. The span at Arg168–Arg184 shows a compositional bias: pro residues. The span at Gln205–Pro215 shows a compositional bias: low complexity. Residues Gly217–Gln234 show a composition bias toward gly residues. The span at Pro311 to Gln326 shows a compositional bias: low complexity.

This is an uncharacterized protein from Drosophila melanogaster (Fruit fly).